A 159-amino-acid chain; its full sequence is Insertion element IS136 uncharacterized 16.9 kDa protein (159 aa).

Residues 126-142 (RSFVSPSSSTPSTARSS) show a composition bias toward low complexity. Residues 126 to 159 (RSFVSPSSSTPSTARSSPGRPLPMQAFPAQTCAT) form a disordered region.

The protein is Insertion element IS136 uncharacterized 16.9 kDa protein of Agrobacterium tumefaciens (strain T37).